We begin with the raw amino-acid sequence, 148 residues long: Urease accessory protein UreE (148 aa).

It belongs to the UreE family.

The protein resides in the cytoplasm. In terms of biological role, involved in urease metallocenter assembly. Binds nickel. Probably functions as a nickel donor during metallocenter assembly. This chain is Urease accessory protein UreE, found in Halalkalibacterium halodurans (strain ATCC BAA-125 / DSM 18197 / FERM 7344 / JCM 9153 / C-125) (Bacillus halodurans).